Reading from the N-terminus, the 130-residue chain is Aspartate 1-decarboxylase (130 aa).

Ser25 acts as the Schiff-base intermediate with substrate; via pyruvic acid in catalysis. A Pyruvic acid (Ser) modification is found at Ser25. Thr57 serves as a coordination point for substrate. The active-site Proton donor is the Tyr58. Position 73–75 (73–75 (GAA)) interacts with substrate.

The protein belongs to the PanD family. As to quaternary structure, heterooctamer of four alpha and four beta subunits. The cofactor is pyruvate. Is synthesized initially as an inactive proenzyme, which is activated by self-cleavage at a specific serine bond to produce a beta-subunit with a hydroxyl group at its C-terminus and an alpha-subunit with a pyruvoyl group at its N-terminus.

It is found in the cytoplasm. It carries out the reaction L-aspartate + H(+) = beta-alanine + CO2. The protein operates within cofactor biosynthesis; (R)-pantothenate biosynthesis; beta-alanine from L-aspartate: step 1/1. Functionally, catalyzes the pyruvoyl-dependent decarboxylation of aspartate to produce beta-alanine. This chain is Aspartate 1-decarboxylase, found in Myxococcus xanthus (strain DK1622).